Here is a 287-residue protein sequence, read N- to C-terminus: NADH-cytochrome b5 reductase 1 (287 aa).

A helical transmembrane segment spans residues 5 to 25; sequence FEALVTALVLAVSFIFIYGKF. The FAD-binding FR-type domain maps to 41-145; the sequence is KDWQEFSLLT…RGPKGFYHYE (105 aa). FAD is bound by residues 125–142 and 151–183; these read AELAIGDRIKVRGPKGFY and EIGMIAGGTGISPMYQIIRAIFSNPRDKTRVCL.

This sequence belongs to the flavoprotein pyridine nucleotide cytochrome reductase family. As to quaternary structure, monomer. Component of the 2-(3-amino-3-carboxypropyl)histidine synthase complex composed of DPH1, DPH2, DPH3 and a NADH-dependent reductase, predominantly CBR1. Requires FAD as cofactor.

It localises to the mitochondrion outer membrane. The enzyme catalyses 2 Fe(III)-[cytochrome b5] + NADH = 2 Fe(II)-[cytochrome b5] + NAD(+) + H(+). It catalyses the reaction 2 Fe(3+)-[Dph3] + NADH = 2 Fe(2+)-[Dph3] + NAD(+) + H(+). Its pathway is protein modification; peptidyl-diphthamide biosynthesis. Its function is as follows. NADH-dependent reductase for DPH3 and cytochrome b5. Required for the first step of diphthamide biosynthesis, a post-translational modification of histidine which occurs in elongation factor 2. DPH1 and DPH2 transfer a 3-amino-3-carboxypropyl (ACP) group from S-adenosyl-L-methionine (SAM) to a histidine residue, the reaction is assisted by a reduction system comprising DPH3 and a NADH-dependent reductase, predominantly CBR1. By reducing DPH3, also involved in the formation of the tRNA wobble base modification mcm5s 2U (5-methoxycarbonylmethyl-2-thiouridine), mediated by the elongator complex. The cytochrome b5/NADH cytochrome b5 reductase electron transfer system supports the catalytic activity of several sterol biosynthetic enzymes. This chain is NADH-cytochrome b5 reductase 1 (CBR1), found in Eremothecium gossypii (strain ATCC 10895 / CBS 109.51 / FGSC 9923 / NRRL Y-1056) (Yeast).